The sequence spans 506 residues: CTL-like protein DDB_G0269978 (506 aa).

2 N-linked (GlcNAc...) asparagine glycosylation sites follow: Asn15 and Asn41. 12 helical membrane-spanning segments follow: residues 91-111 (LLYS…TVIA), 126-146 (LQGL…FLIW), 161-181 (SFFS…GNGW), 182-202 (YSWA…YFAF), 226-246 (TLLV…IWLF), 256-276 (SYWT…LYWT), 279-299 (VITY…YFFA), 323-343 (FGSI…QFIC), 345-367 (GFAR…ALIF), 371-393 (LYTF…CNSS), 416-436 (ITML…VTMI), and 447-467 (WLYV…DIIF).

This sequence belongs to the CTL (choline transporter-like) family.

Its subcellular location is the membrane. The chain is CTL-like protein DDB_G0269978 from Dictyostelium discoideum (Social amoeba).